A 187-amino-acid polypeptide reads, in one-letter code: Phosphatidylethanolamine-binding protein 1 (187 aa).

Residues Ser6 and Ser13 each carry the phosphoserine modification. Thr42 bears the Phosphothreonine mark. Ser52 and Ser98 each carry phosphoserine. The tract at residues Lys93–Asp134 is interaction with RAF1.

This sequence belongs to the phosphatidylethanolamine-binding protein family. As to quaternary structure, has a tendency to form dimers by disulfide cross-linking. Interacts with RAF1 and this interaction is enhanced if RAF1 is phosphorylated on residues 'Ser-338', 'Ser-339', 'Tyr-340' and 'Tyr-341'. Interacts with ALOX15; in response to IL13/interleukin-13, prevents the interaction of PEBP1 with RAF1 to activate the ERK signaling cascade.

Its subcellular location is the cytoplasm. In terms of biological role, binds ATP, opioids and phosphatidylethanolamine. Has lower affinity for phosphatidylinositol and phosphatidylcholine. Serine protease inhibitor which inhibits thrombin, neuropsin and chymotrypsin but not trypsin, tissue type plasminogen activator and elastase. Inhibits the kinase activity of RAF1 by inhibiting its activation and by dissociating the RAF1/MEK complex and acting as a competitive inhibitor of MEK phosphorylation. Functionally, HCNP may be involved in the function of the presynaptic cholinergic neurons of the central nervous system. HCNP increases the production of choline acetyltransferase but not acetylcholinesterase. Seems to be mediated by a specific receptor. This Oryctolagus cuniculus (Rabbit) protein is Phosphatidylethanolamine-binding protein 1 (PEBP1).